We begin with the raw amino-acid sequence, 407 residues long: MNNSVREPTRGRRGSPPVADAALSVNPPLSVVLAGGGTAGHVEPAMAVADALRALDPQVRITALGTSRGLETRLVPERGYHLELITPVPLPRKLTGDLARLPLRVWRAVRETRAVFEVVEAHVVVGFGGYVALPAYLAARGIPRVRRRIPVVVHEANARAGIANRVGVRTAERVLSAVPGSGLRGAEVVGVPIHATITTLNRPALRADARKHFGFTDDARVLLVFGGSQGAVSLNRAVAGAAEDLAASGVAVLHAYGLKNTLELRTPEYGEPPYVAVPYLDRMDLAYAAADLVICRSGAMTVAEVSAVGLPAIYVPFPIGNGEQRLNALPVVNAGGGLVVADADLTPGLVARQVVRLFSDPAQLAAMTAAAARVGHRDAAHHVAKVALDLARAERDTASGRSAGGKP.

Residues 1 to 21 form a disordered region; sequence MNNSVREPTRGRRGSPPVADA. UDP-N-acetyl-alpha-D-glucosamine-binding positions include 38–40, Asn157, Ser228, and Gln324; that span reads TAG.

Belongs to the glycosyltransferase 28 family. MurG subfamily.

The protein localises to the cell membrane. The enzyme catalyses di-trans,octa-cis-undecaprenyl diphospho-N-acetyl-alpha-D-muramoyl-L-alanyl-D-glutamyl-meso-2,6-diaminopimeloyl-D-alanyl-D-alanine + UDP-N-acetyl-alpha-D-glucosamine = di-trans,octa-cis-undecaprenyl diphospho-[N-acetyl-alpha-D-glucosaminyl-(1-&gt;4)]-N-acetyl-alpha-D-muramoyl-L-alanyl-D-glutamyl-meso-2,6-diaminopimeloyl-D-alanyl-D-alanine + UDP + H(+). It functions in the pathway cell wall biogenesis; peptidoglycan biosynthesis. Its function is as follows. Cell wall formation. Catalyzes the transfer of a GlcNAc subunit on undecaprenyl-pyrophosphoryl-MurNAc-pentapeptide (lipid intermediate I) to form undecaprenyl-pyrophosphoryl-MurNAc-(pentapeptide)GlcNAc (lipid intermediate II). This is UDP-N-acetylglucosamine--N-acetylmuramyl-(pentapeptide) pyrophosphoryl-undecaprenol N-acetylglucosamine transferase from Mycobacterium leprae (strain TN).